A 255-amino-acid polypeptide reads, in one-letter code: Acetylglutamate kinase (255 aa).

Residues 40–41, Arg-62, and Asn-153 each bind substrate; that span reads GG.

Belongs to the acetylglutamate kinase family. ArgB subfamily.

The protein localises to the cytoplasm. The catalysed reaction is N-acetyl-L-glutamate + ATP = N-acetyl-L-glutamyl 5-phosphate + ADP. Its pathway is amino-acid biosynthesis; L-arginine biosynthesis; N(2)-acetyl-L-ornithine from L-glutamate: step 2/4. In terms of biological role, catalyzes the ATP-dependent phosphorylation of N-acetyl-L-glutamate. In Bacillus thuringiensis (strain Al Hakam), this protein is Acetylglutamate kinase.